The chain runs to 364 residues: NAC transcription factor 56 (364 aa).

The disordered stretch occupies residues 1-23 (MESTDSSGGPPPPQPNLPPGFRF). Residues 9 to 18 (GPPPPQPNLP) show a composition bias toward pro residues. An NAC domain is found at 17–178 (LPPGFRFHPT…DWVLCRIYKK (162 aa)). A DNA-binding region spans residues 116–184 (VGVKKALVFY…IYKKNNASRH (69 aa)).

As to expression, stamen specific, in anthers from stage 8. Expressed in the outer integument, but seems not expressed in the embryo at the torpedo stage.

The protein resides in the nucleus. Functionally, transcription factor of the NAC family. Together with NAC018/NARS2, regulates embryogenesis by regulating the development and degeneration of ovule integuments, a process required for intertissue communication between the embryo and the maternal integument. The protein is NAC transcription factor 56 of Arabidopsis thaliana (Mouse-ear cress).